The primary structure comprises 253 residues: Matrix protein (253 aa).

Positions 1–26 (MLSRIKQGIKTKRSSSSSSSRSKTGD) are disordered. Positions 55-58 (PTAP) match the PTAP/PSAP motif motif.

In terms of assembly, homomultimer. Interacts with viral nucleocapsid. Interacts with host TSG101.

It localises to the virion membrane. It is found in the host endomembrane system. Its subcellular location is the host nucleus membrane. Its function is as follows. Plays a major role in assembly and budding of virion, by recruiting cellular partners of the ESCRT complexes that play a key role in releasing the budding particle from the host membrane. Condensates the ribonucleocapsid core during virus assembly. The chain is Matrix protein (M) from Bos taurus (Bovine).